The primary structure comprises 363 residues: Histidinol-phosphate aminotransferase (363 aa).

The residue at position 220 (K220) is an N6-(pyridoxal phosphate)lysine.

It belongs to the class-II pyridoxal-phosphate-dependent aminotransferase family. Histidinol-phosphate aminotransferase subfamily. Homodimer. Pyridoxal 5'-phosphate is required as a cofactor.

It carries out the reaction L-histidinol phosphate + 2-oxoglutarate = 3-(imidazol-4-yl)-2-oxopropyl phosphate + L-glutamate. It participates in amino-acid biosynthesis; L-histidine biosynthesis; L-histidine from 5-phospho-alpha-D-ribose 1-diphosphate: step 7/9. This Paramagnetospirillum magneticum (strain ATCC 700264 / AMB-1) (Magnetospirillum magneticum) protein is Histidinol-phosphate aminotransferase.